The primary structure comprises 150 residues: 3-dehydroquinate dehydratase (150 aa).

The active-site Proton acceptor is the Tyr-26. The substrate site is built by Asn-77, His-83, and Asp-90. His-103 (proton donor) is an active-site residue. Residues 104 to 105 (LS) and Arg-114 each bind substrate.

The protein belongs to the type-II 3-dehydroquinase family. As to quaternary structure, homododecamer.

The enzyme catalyses 3-dehydroquinate = 3-dehydroshikimate + H2O. Its pathway is metabolic intermediate biosynthesis; chorismate biosynthesis; chorismate from D-erythrose 4-phosphate and phosphoenolpyruvate: step 3/7. In terms of biological role, catalyzes a trans-dehydration via an enolate intermediate. The chain is 3-dehydroquinate dehydratase from Pectobacterium carotovorum subsp. carotovorum (strain PC1).